A 254-amino-acid polypeptide reads, in one-letter code: Cold shock-induced protein TIR1 (254 aa).

Residues 1-18 (MAYTKIALFAAIAALASA) form the signal peptide. Residues 110–213 (NGDASSSAAP…SSTGAKTSAI (104 aa)) form a disordered region. Over residues 113-197 (ASSSAAPSSS…SAAPSSTEAK (85 aa)) the composition is skewed to low complexity. Tandem repeats lie at residues 114 to 119 (SSSAAP), 120 to 125 (SSSAAP), 126 to 131 (TSSAAP), 132 to 137 (SSSAAP), 138 to 143 (TSSAAS), 144 to 155 (SSSEAKSSSAAP), 156 to 167 (SSSEAKSSSAAP), 168 to 179 (SSSEAKSSSAAP), 180 to 191 (SSSEAKSSSAAP), and 192 to 203 (SSTEAKITSAAP). The tract at residues 114–143 (SSSAAPSSSAAPTSSAAPSSSAAPTSSAAS) is 5 X 6 AA approximate tandem repeats, Ala/Ser-rich. The segment at 144–203 (SSSEAKSSSAAPSSSEAKSSSAAPSSSEAKSSSAAPSSSEAKSSSAAPSSTEAKITSAAP) is 5 X 12 AA approximate tandem repeats, Ala/Ser-rich. A compositionally biased stretch (polar residues) spans 201–213 (AAPSSTGAKTSAI). A PIR1/2/3 repeat occupies 210–224 (TSAISQITDGQIQAT). N233 carries the GPI-anchor amidated asparagine lipid modification. Residues 234 to 254 (GAAKAFVGMGAGVVAAAAMLL) constitute a propeptide, removed in mature form.

The protein belongs to the SRP1/TIP1 family. O-glycosylated. Post-translationally, the GPI-anchor is attached to the protein in the endoplasmic reticulum and serves to target the protein to the cell surface. There, the glucosamine-inositol phospholipid moiety is cleaved off and the GPI-modified mannoprotein is covalently attached via its lipidless GPI glycan remnant to the 1,6-beta-glucan of the outer cell wall layer. In terms of processing, covalently linked to beta-1,3-glucan of the inner cell wall layer via an alkali-sensitive ester linkage between the gamma-carboxyl group of glutamic acids, arising from a specific glutamine within the PIR1/2/3 repeat, and hydroxyl groups of glucoses of beta-1,3-glucan chains.

The protein localises to the secreted. Its subcellular location is the cell wall. The protein resides in the membrane. In terms of biological role, component of the cell wall. Required for anaerobic growth. This chain is Cold shock-induced protein TIR1 (TIR1), found in Saccharomyces cerevisiae (strain ATCC 204508 / S288c) (Baker's yeast).